The following is a 198-amino-acid chain: Chromophore lyase CpcT/CpeT 3 (198 aa).

It belongs to the CpcT/CpeT biliprotein lyase family.

Functionally, covalently attaches a chromophore to Cys residue(s) of phycobiliproteins. The sequence is that of Chromophore lyase CpcT/CpeT 3 from Synechococcus sp. (strain JA-3-3Ab) (Cyanobacteria bacterium Yellowstone A-Prime).